The primary structure comprises 1845 residues: Proteasome activator complex subunit 4 (1845 aa).

Basic and acidic residues predominate over residues 1-13 (MEPAERAGGRDPL). The interval 1 to 26 (MEPAERAGGRDPLEPGGRPGPDPQGF) is disordered. HEAT repeat units lie at residues 475 to 519 (PEGP…LVDC) and 1000 to 1039 (NFCC…NHSG). The residue at position 1123 (Ser-1123) is a Phosphoserine. 2 HEAT repeats span residues 1181–1219 (RVLP…QLKR) and 1356–1394 (DAFL…GSKH). Position 1616 is a phosphoserine (Ser-1616). HEAT repeat units lie at residues 1638 to 1676 (PHQV…YNLF) and 1682 to 1720 (EDAV…CNFL). The bromodomain-like (BRDL) stretch occupies residues 1652-1740 (ARSSSWHARY…EQLCKTKLPK (89 aa)).

Belongs to the BLM10 family. As to quaternary structure, homodimer. Component of the spermatoproteasome, a form of the proteasome specifically found in testis. Interacts with the 20S and 26S proteasomes. Phosphorylated.

It localises to the cytoplasm. It is found in the cytosol. Its subcellular location is the nucleus. The protein resides in the nucleus speckle. Functionally, associated component of the proteasome that specifically recognizes acetylated histones and promotes ATP- and ubiquitin-independent degradation of core histones during spermatogenesis and DNA damage response. Recognizes and binds acetylated histones via its bromodomain-like (BRDL) region and activates the proteasome by opening the gated channel for substrate entry. Binds to the core proteasome via its C-terminus, which occupies the same binding sites as the proteasomal ATPases, opening the closed structure of the proteasome via an active gating mechanism. Component of the spermatoproteasome, a form of the proteasome specifically found in testis: binds to acetylated histones and promotes degradation of histones, thereby participating actively to the exchange of histones during spermatogenesis. Also involved in DNA damage response in somatic cells, by promoting degradation of histones following DNA double-strand breaks. This is Proteasome activator complex subunit 4 (PSME4) from Bos taurus (Bovine).